We begin with the raw amino-acid sequence, 826 residues long: Ribonucleoside-diphosphate reductase large subunit (826 aa).

Substrate-binding positions include T171, 186-187 (SC), G217, 387-391 (NLCAE), and 594-598 (PTSGC). Residues C187 and C403 are joined by a disulfide bond. N387 serves as the catalytic Proton acceptor. Residue C389 is the Cysteine radical intermediate of the active site. Catalysis depends on E391, which acts as the Proton acceptor.

It belongs to the ribonucleoside diphosphate reductase large chain family. In terms of assembly, heterotetramer composed of a homodimer of the large subunit (R1) and a homodimer of the small subunit (R2). Larger multisubunit protein complex are also active, composed of (R1)n(R2)n.

The enzyme catalyses a 2'-deoxyribonucleoside 5'-diphosphate + [thioredoxin]-disulfide + H2O = a ribonucleoside 5'-diphosphate + [thioredoxin]-dithiol. Functionally, ribonucleoside-diphosphate reductase holoenzyme provides the precursors necessary for viral DNA synthesis. Allows virus growth in non-dividing cells, as well as reactivation from latency in infected hosts. Catalyzes the biosynthesis of deoxyribonucleotides from the corresponding ribonucleotides. In Epstein-Barr virus (strain GD1) (HHV-4), this protein is Ribonucleoside-diphosphate reductase large subunit.